The primary structure comprises 404 residues: Trigger factor (404 aa).

The PPIase FKBP-type domain occupies Lys160–Pro225.

The protein belongs to the FKBP-type PPIase family. Tig subfamily.

It localises to the cytoplasm. The catalysed reaction is [protein]-peptidylproline (omega=180) = [protein]-peptidylproline (omega=0). Involved in protein export. Acts as a chaperone by maintaining the newly synthesized protein in an open conformation. Functions as a peptidyl-prolyl cis-trans isomerase. This is Trigger factor from Thermus thermophilus (strain ATCC BAA-163 / DSM 7039 / HB27).